The following is a 450-amino-acid chain: UDP-N-acetylmuramoylalanine--D-glutamate ligase (450 aa).

Gly-118–Thr-124 serves as a coordination point for ATP.

Belongs to the MurCDEF family.

It localises to the cytoplasm. The enzyme catalyses UDP-N-acetyl-alpha-D-muramoyl-L-alanine + D-glutamate + ATP = UDP-N-acetyl-alpha-D-muramoyl-L-alanyl-D-glutamate + ADP + phosphate + H(+). The protein operates within cell wall biogenesis; peptidoglycan biosynthesis. Its function is as follows. Cell wall formation. Catalyzes the addition of glutamate to the nucleotide precursor UDP-N-acetylmuramoyl-L-alanine (UMA). The sequence is that of UDP-N-acetylmuramoylalanine--D-glutamate ligase from Halalkalibacterium halodurans (strain ATCC BAA-125 / DSM 18197 / FERM 7344 / JCM 9153 / C-125) (Bacillus halodurans).